The following is a 2636-amino-acid chain: Ankyrin repeat and KH domain-containing protein CBG24701 (2636 aa).

ANK repeat units follow at residues 252-281 (SRITPLMEAAASSSEMIVELLLDYGMDPNA), 286-317 (NCNTALIYAAATDDRDMVEVILEHEGPHKVDV), 361-390 (NDNSPLIFAAMKGFLDIATVILDYQDKNQQ), 435-464 (NLPSPMMLACAGGFPELVEILLAAGARIDE), 468-500 (HKNTCLIEACDGVSGDQVSVVRMLLNRHADVNA), 505-534 (SGDTPMSLAARHGNIAIMKMLYEKGADLTT), 536-564 (KITPIVEASIETHLECVQFILAHCKTIPQ), 566-595 (QLSRALFAAAEGGCLKIVEELVRAGADLNF), 598-627 (DERTAIMKAARFNHFDIVQYLVYKGASVNF), 632-661 (NDATALSLACTYGNMDIAQFLIRNGADPML), and 665-695 (DGVNCFMEAAKHGSFDLMKLLVEFTKGNMDL). Disordered stretches follow at residues 994–1030 (PIDAHQSNPPPAQQTGPKTTSLTTPQPDESNGATTIE), 1172–1191 (KSNRDKGSQQLKAAEQKKGK), and 1230–1268 (NNTQVQQQQGQQQQGQLRRTHSEGDGTERAKARSNVIDK). The segment covering 1006–1030 (QQTGPKTTSLTTPQPDESNGATTIE) has biased composition (polar residues). Over residues 1233–1245 (QVQQQQGQQQQGQ) the composition is skewed to low complexity. Residues 1249–1260 (THSEGDGTERAK) show a composition bias toward basic and acidic residues. 10 ANK repeats span residues 1273–1302 (TLETPLSIACSNGHREVVELLLKEGANIEH), 1306–1335 (KGFTPLIIAATYGHAPIVEVLLKNHAAIEA), 1340–1369 (TKDTALSLACTAGRKDVVEMLLAHGANKEH), 1373–1402 (SDYTPLSLASSSGFLDIVNLLLTAGSEINS), 1408–1437 (LGISPLMLAAMNGHKETTKVLLEKGSDINA), 1447–1476 (YRNTALTLASFQGRFEVVKLLLCYNANVEH), 1480–1509 (TGLTPLMECASGGYVDVGNLLIENGADPNA), 1515–1546 (TKDTALTIAAEKGHEKFVQMLLDNDVIYDIRN), 1548–1577 (KGCSALWLACNGGHLGTAQALVFKGADTDM), and 1581–1610 (RKMSPMVAAFRKGHIEIIKFLVGHAKQFPN). Residues 1638–1696 (RNAKKAQAETAEETANRLLQLIDDEKERDINKKQKIKDKKKQKKEAKKKFQAEQEQLSA) adopt a coiled-coil conformation. The tract at residues 1669-1857 (KKQKIKDKKK…SSISERQHSW (189 aa)) is disordered. Over residues 1670-1686 (KQKIKDKKKQKKEAKKK) the composition is skewed to basic residues. A compositionally biased stretch (pro residues) spans 1698–1708 (PSKPEPVVAPE). Residues 1709–1722 (PEPEPETEPVEEPA) show a composition bias toward acidic residues. A compositionally biased stretch (basic and acidic residues) spans 1811–1829 (DWQKAGKEGKKVRPKREGR). Polar residues predominate over residues 1832-1851 (APSSAGSSQAKHRSNTSSIS). The KH domain maps to 1864 to 1929 (VKAYEFTVPG…DVVSMAVNII (66 aa)). 7 disordered regions span residues 1980–2182 (SASI…SLPS), 2196–2221 (FKPTAPAPAPVTSIAPSTSTATSTAS), 2269–2292 (NSTASSLNTATTKNDTSDWGSNDF), 2301–2320 (SNQKTSSAPQQPVSSVNSQL), 2352–2417 (SQSS…TQQQ), 2444–2465 (MHRQENSSSVPGPSQPSANPYY), and 2539–2636 (GMMQ…SSRM). Residues 1994–2008 (SQCNRSSKSHGNQAT) are compositionally biased toward polar residues. Over residues 2025–2045 (TPPTQTQTKQQPTPSPQVQQP) the composition is skewed to low complexity. The segment covering 2057–2083 (SLAQSSVPQATENVTKPTQTPPASVQQ) has biased composition (polar residues). Low complexity-rich tracts occupy residues 2099-2119 (QVVQPVPPVHQHTPVPQQRPQ) and 2139-2148 (QQHMQQIQQQ). A compositionally biased stretch (pro residues) spans 2167-2179 (PGPPVQPQTPPQS). Low complexity predominate over residues 2269-2280 (NSTASSLNTATT). Positions 2281–2292 (KNDTSDWGSNDF) are enriched in polar residues. 2 stretches are compositionally biased toward low complexity: residues 2361–2373 (QHQQQQQRIMQDP) and 2391–2417 (PQQFQQPQFSSQSHPSQSSMMPSTQQQ). 3 stretches are compositionally biased toward polar residues: residues 2449 to 2465 (NSSSVPGPSQPSANPYY), 2565 to 2574 (RSASGSSQNR), and 2583 to 2595 (QQPQPFSQLTQAD). Residues 2599 to 2615 (RLLLQQQQQQRSSQQQQ) are compositionally biased toward low complexity. Residues 2616-2636 (NPTNQGLPQKWSNTWNSSSRM) are compositionally biased toward polar residues.

This sequence belongs to the mask family.

It localises to the cytoplasm. This Caenorhabditis briggsae protein is Ankyrin repeat and KH domain-containing protein CBG24701.